Here is a 654-residue protein sequence, read N- to C-terminus: tRNA 5-methylaminomethyl-2-thiouridine biosynthesis bifunctional protein MnmC (654 aa).

The tRNA (mnm(5)s(2)U34)-methyltransferase stretch occupies residues Met-1–Gln-235. The tract at residues Val-261–Gly-654 is FAD-dependent cmnm(5)s(2)U34 oxidoreductase.

In the N-terminal section; belongs to the methyltransferase superfamily. tRNA (mnm(5)s(2)U34)-methyltransferase family. This sequence in the C-terminal section; belongs to the DAO family. The cofactor is FAD.

It localises to the cytoplasm. It catalyses the reaction 5-aminomethyl-2-thiouridine(34) in tRNA + S-adenosyl-L-methionine = 5-methylaminomethyl-2-thiouridine(34) in tRNA + S-adenosyl-L-homocysteine + H(+). Catalyzes the last two steps in the biosynthesis of 5-methylaminomethyl-2-thiouridine (mnm(5)s(2)U) at the wobble position (U34) in tRNA. Catalyzes the FAD-dependent demodification of cmnm(5)s(2)U34 to nm(5)s(2)U34, followed by the transfer of a methyl group from S-adenosyl-L-methionine to nm(5)s(2)U34, to form mnm(5)s(2)U34. This Pseudomonas paraeruginosa (strain DSM 24068 / PA7) (Pseudomonas aeruginosa (strain PA7)) protein is tRNA 5-methylaminomethyl-2-thiouridine biosynthesis bifunctional protein MnmC.